The following is a 490-amino-acid chain: Betaine aldehyde dehydrogenase (490 aa).

K(+) is bound by residues threonine 26, isoleucine 27, and aspartate 93. 150-152 (GAW) lines the NAD(+) pocket. Lysine 162 functions as the Charge relay system in the catalytic mechanism. 176–179 (KPSE) is an NAD(+) binding site. Valine 180 serves as a coordination point for K(+). An NAD(+)-binding site is contributed by 230-233 (GVAS). Residue leucine 246 participates in K(+) binding. Glutamate 252 (proton acceptor) is an active-site residue. NAD(+) contacts are provided by glycine 254, cysteine 286, and glutamate 387. The active-site Nucleophile is the cysteine 286. Position 286 is a cysteine sulfenic acid (-SOH) (cysteine 286). Positions 457 and 460 each coordinate K(+). Catalysis depends on glutamate 464, which acts as the Charge relay system.

This sequence belongs to the aldehyde dehydrogenase family. As to quaternary structure, dimer of dimers. Requires K(+) as cofactor.

The enzyme catalyses betaine aldehyde + NAD(+) + H2O = glycine betaine + NADH + 2 H(+). It functions in the pathway amine and polyamine biosynthesis; betaine biosynthesis via choline pathway; betaine from betaine aldehyde: step 1/1. Its function is as follows. Involved in the biosynthesis of the osmoprotectant glycine betaine. Catalyzes the irreversible oxidation of betaine aldehyde to the corresponding acid. The polypeptide is Betaine aldehyde dehydrogenase (Escherichia coli (strain K12 / DH10B)).